The following is a 245-amino-acid chain: NAD(P)H-quinone oxidoreductase subunit K (245 aa).

[4Fe-4S] cluster contacts are provided by cysteine 58, cysteine 59, cysteine 123, and cysteine 154. Positions serine 210–glycine 245 are disordered. The segment covering lysine 236 to glycine 245 has biased composition (basic and acidic residues).

The protein belongs to the complex I 20 kDa subunit family. As to quaternary structure, NDH-1 can be composed of about 15 different subunits; different subcomplexes with different compositions have been identified which probably have different functions. [4Fe-4S] cluster serves as cofactor.

The protein localises to the cellular thylakoid membrane. The catalysed reaction is a plastoquinone + NADH + (n+1) H(+)(in) = a plastoquinol + NAD(+) + n H(+)(out). It catalyses the reaction a plastoquinone + NADPH + (n+1) H(+)(in) = a plastoquinol + NADP(+) + n H(+)(out). Functionally, NDH-1 shuttles electrons from an unknown electron donor, via FMN and iron-sulfur (Fe-S) centers, to quinones in the respiratory and/or the photosynthetic chain. The immediate electron acceptor for the enzyme in this species is believed to be plastoquinone. Couples the redox reaction to proton translocation, and thus conserves the redox energy in a proton gradient. Cyanobacterial NDH-1 also plays a role in inorganic carbon-concentration. In Nostoc punctiforme (strain ATCC 29133 / PCC 73102), this protein is NAD(P)H-quinone oxidoreductase subunit K.